A 473-amino-acid polypeptide reads, in one-letter code: BPI fold-containing family B member 3 (473 aa).

The signal sequence occupies residues methionine 1–glycine 20. An N-linked (GlcNAc...) asparagine glycan is attached at asparagine 139. Cysteine 161 and cysteine 196 are oxidised to a cystine.

The protein belongs to the BPI/LBP/Plunc superfamily. BPI/LBP family.

It is found in the secreted. Functionally, may have the capacity to recognize and bind specific classes of odorants. May act as a carrier molecule, transporting odorants across the mucus layer to access receptor sites. May serve as a primary defense mechanism by recognizing and removing potentially harmful odorants or pathogenic microorganisms from the mucosa or clearing excess odorant from mucus to enable new odorant stimuli to be received. In Mus musculus (Mouse), this protein is BPI fold-containing family B member 3.